A 415-amino-acid chain; its full sequence is MAENGDNEKMTALEAKICHQIEYYFGDFNLPRDKFLKEQIKLDEGWVPLETMIKFNRLNRLTTDFNVIVQALSKSKAKLMEVSADKTKIRRSPSRPLPEVTDEYKNDVKNRSVYIKGFPTDATLDDIKEWLDDKGQILNIQMRRTLHKTFKGSIFAVFDSIQSAKKFVEIPGQKYKDTNLLILFKEDYFAKKNEERKQSKVEAKLKAKQEHEGRHKPGSTETRALEGKMGCLLKFSGDLDDQTCREDLHFLFSNHGEIKWVDFARGAKEGIILFKEKAKEALEKARNANNGNLLLRNKKVTWKVLEGHAEKEALKKITDDQQESLNKWKSKGGHAGGRFKGSHVFTAARRFKGKGKGNRPGYAGAPKGRGQFHGRRTRFDDDDRRRGPMKRGRDGRDREEPASKHKKRENGARDK.

Residues 7–99 (NEKMTALEAK…RRSPSRPLPE (93 aa)) form the HTH La-type RNA-binding domain. 2 positions are modified to phosphoserine: serine 92 and serine 94. The 77-residue stretch at 111-187 (RSVYIKGFPT…TNLLILFKED (77 aa)) folds into the RRM domain. At lysine 116 the chain carries N6-acetyllysine. Residue threonine 120 is modified to Phosphothreonine. 3 positions are modified to N6-acetyllysine: lysine 128, lysine 327, and lysine 356. In terms of domain architecture, xRRM spans 226-346 (EGKMGCLLKF…GRFKGSHVFT (121 aa)). A disordered region spans residues 349 to 415 (RRFKGKGKGN…KKRENGARDK (67 aa)). Threonine 377 carries the post-translational modification Phosphothreonine. Positions 377–415 (TRFDDDDRRRGPMKRGRDGRDREEPASKHKKRENGARDK) are enriched in basic and acidic residues.

In terms of assembly, interacts with DDX15. May interact with RUFY1. In terms of processing, phosphorylated.

It is found in the nucleus. Functionally, binds to the 3' poly(U) terminus of nascent RNA polymerase III transcripts, protecting them from exonuclease digestion and facilitating their folding and maturation. In Mus musculus (Mouse), this protein is Lupus La protein homolog (Ssb).